The following is a 329-amino-acid chain: Aspartate--ammonia ligase (329 aa).

The protein belongs to the class-II aminoacyl-tRNA synthetase family. AsnA subfamily.

The protein localises to the cytoplasm. The catalysed reaction is L-aspartate + NH4(+) + ATP = L-asparagine + AMP + diphosphate + H(+). The protein operates within amino-acid biosynthesis; L-asparagine biosynthesis; L-asparagine from L-aspartate (ammonia route): step 1/1. In Ureaplasma parvum serovar 3 (strain ATCC 27815 / 27 / NCTC 11736), this protein is Aspartate--ammonia ligase.